We begin with the raw amino-acid sequence, 625 residues long: Interleukin-1 receptor-associated kinase-like 2 (625 aa).

Positions 13–94 (LDDLCRNMDA…RAAQIILNWK (82 aa)) constitute a Death domain. The tract at residues 111–181 (KPEKPLAASV…SSDSKDFSTS (71 aa)) is disordered. Ser144 bears the Phosphoserine mark. Positions 169–181 (LPTSSDSKDFSTS) are enriched in polar residues. A Protein kinase domain is found at 210 to 489 (FNQNRKISQG…LCLRRRNTSL (280 aa)). Residues 216 to 224 (ISQGTFADV), Lys237, and 337 to 340 (KSSN) each bind ATP. Positions 510–540 (LPWSGLSEGTGSSSNTPEETDDVDNSSLDAS) are disordered. Residues 516–526 (SEGTGSSSNTP) are compositionally biased toward polar residues.

Belongs to the protein kinase superfamily. TKL Ser/Thr protein kinase family. Pelle subfamily. Interacts with MYD88. IL-1 stimulation leads to the formation of a signaling complex which dissociates from the IL-1 receptor following the binding of PELI1. In terms of tissue distribution, expressed in spleen, thymus, prostate, lung, liver, skeletal muscle, kidney, pancreas and peripheral blood leukocytes.

Its function is as follows. Binds to the IL-1 type I receptor following IL-1 engagement, triggering intracellular signaling cascades leading to transcriptional up-regulation and mRNA stabilization. This Homo sapiens (Human) protein is Interleukin-1 receptor-associated kinase-like 2 (IRAK2).